The following is a 70-amino-acid chain: Protein SlyX homolog (70 aa).

The protein belongs to the SlyX family.

This chain is Protein SlyX homolog, found in Shewanella oneidensis (strain ATCC 700550 / JCM 31522 / CIP 106686 / LMG 19005 / NCIMB 14063 / MR-1).